Consider the following 113-residue polypeptide: Large ribosomal subunit protein uL22 (113 aa).

Belongs to the universal ribosomal protein uL22 family. In terms of assembly, part of the 50S ribosomal subunit.

Functionally, this protein binds specifically to 23S rRNA; its binding is stimulated by other ribosomal proteins, e.g. L4, L17, and L20. It is important during the early stages of 50S assembly. It makes multiple contacts with different domains of the 23S rRNA in the assembled 50S subunit and ribosome. Its function is as follows. The globular domain of the protein is located near the polypeptide exit tunnel on the outside of the subunit, while an extended beta-hairpin is found that lines the wall of the exit tunnel in the center of the 70S ribosome. The polypeptide is Large ribosomal subunit protein uL22 (Anoxybacillus flavithermus (strain DSM 21510 / WK1)).